The sequence spans 545 residues: CTP synthase (545 aa).

Positions 1 to 266 are amidoligase domain; the sequence is MTTNYIFVTG…DDYICKRFSL (266 aa). Position 14 (serine 14) interacts with CTP. Residue serine 14 coordinates UTP. ATP is bound by residues 15–20 and aspartate 72; that span reads SLGKGI. The Mg(2+) site is built by aspartate 72 and glutamate 140. Residues 147–149, 187–192, and lysine 223 each bind CTP; these read DIE and KTKPTQ. Residues 187–192 and lysine 223 contribute to the UTP site; that span reads KTKPTQ. Residue 239–241 participates in ATP binding; that stretch reads KDV. One can recognise a Glutamine amidotransferase type-1 domain in the interval 291 to 542; sequence TIGMVGKYIE…VKAASEYQKR (252 aa). Glycine 352 lines the L-glutamine pocket. Cysteine 379 functions as the Nucleophile; for glutamine hydrolysis in the catalytic mechanism. Residues 380–383, glutamate 403, and arginine 470 each bind L-glutamine; that span reads LGMQ. Catalysis depends on residues histidine 515 and glutamate 517.

It belongs to the CTP synthase family. Homotetramer.

The catalysed reaction is UTP + L-glutamine + ATP + H2O = CTP + L-glutamate + ADP + phosphate + 2 H(+). It catalyses the reaction L-glutamine + H2O = L-glutamate + NH4(+). The enzyme catalyses UTP + NH4(+) + ATP = CTP + ADP + phosphate + 2 H(+). The protein operates within pyrimidine metabolism; CTP biosynthesis via de novo pathway; CTP from UDP: step 2/2. Allosterically activated by GTP, when glutamine is the substrate; GTP has no effect on the reaction when ammonia is the substrate. The allosteric effector GTP functions by stabilizing the protein conformation that binds the tetrahedral intermediate(s) formed during glutamine hydrolysis. Inhibited by the product CTP, via allosteric rather than competitive inhibition. Functionally, catalyzes the ATP-dependent amination of UTP to CTP with either L-glutamine or ammonia as the source of nitrogen. Regulates intracellular CTP levels through interactions with the four ribonucleotide triphosphates. This chain is CTP synthase, found in Klebsiella pneumoniae (strain 342).